A 189-amino-acid chain; its full sequence is Elongation factor P (189 aa).

An N6-(3,6-diaminohexanoyl)-5-hydroxylysine modification is found at Lys-34.

Belongs to the elongation factor P family. May be beta-lysylated on the epsilon-amino group of Lys-34 by the combined action of EpmA and EpmB, and then hydroxylated on the C5 position of the same residue by EpmC (if this protein is present). Lysylation is critical for the stimulatory effect of EF-P on peptide-bond formation. The lysylation moiety may extend toward the peptidyltransferase center and stabilize the terminal 3-CCA end of the tRNA. Hydroxylation of the C5 position on Lys-34 may allow additional potential stabilizing hydrogen-bond interactions with the P-tRNA.

The protein resides in the cytoplasm. It functions in the pathway protein biosynthesis; polypeptide chain elongation. Functionally, involved in peptide bond synthesis. Alleviates ribosome stalling that occurs when 3 or more consecutive Pro residues or the sequence PPG is present in a protein, possibly by augmenting the peptidyl transferase activity of the ribosome. Modification of Lys-34 is required for alleviation. The polypeptide is Elongation factor P (Alkalilimnicola ehrlichii (strain ATCC BAA-1101 / DSM 17681 / MLHE-1)).